Reading from the N-terminus, the 227-residue chain is Large ribosomal subunit protein bL25 (227 aa).

This sequence belongs to the bacterial ribosomal protein bL25 family. CTC subfamily. Part of the 50S ribosomal subunit; part of the 5S rRNA/L5/L18/L25 subcomplex. Contacts the 5S rRNA. Binds to the 5S rRNA independently of L5 and L18.

This is one of the proteins that binds to the 5S RNA in the ribosome where it forms part of the central protuberance. In Polaromonas sp. (strain JS666 / ATCC BAA-500), this protein is Large ribosomal subunit protein bL25.